The following is a 206-amino-acid chain: Small ribosomal subunit protein uS4c (206 aa).

One can recognise an S4 RNA-binding domain in the interval 94 to 152 (MRLDNIVFRLGMAPTIPAARQLVNHRHILVNDFTVNIPSYSCKLGDKISVQKRFESKTN).

It belongs to the universal ribosomal protein uS4 family. Part of the 30S ribosomal subunit. Contacts protein S5. The interaction surface between S4 and S5 is involved in control of translational fidelity.

The protein resides in the plastid. It localises to the chloroplast. One of the primary rRNA binding proteins, it binds directly to 16S rRNA where it nucleates assembly of the body of the 30S subunit. Functionally, with S5 and S12 plays an important role in translational accuracy. In Chara vulgaris (Common stonewort), this protein is Small ribosomal subunit protein uS4c (rps4).